Here is a 250-residue protein sequence, read N- to C-terminus: Kallikrein-9 (250 aa).

A signal peptide spans 1 to 15 (MKLGLLCALLSLLAG). Positions 23–249 (AIGAEECRPN…YLDWIQEIME (227 aa)) constitute a Peptidase S1 domain. Intrachain disulfides connect cysteine 29–cysteine 164, cysteine 48–cysteine 64, cysteine 136–cysteine 238, cysteine 143–cysteine 210, cysteine 175–cysteine 189, and cysteine 200–cysteine 225. Residues histidine 63 and aspartate 111 each act as charge relay system in the active site. N-linked (GlcNAc...) asparagine glycans are attached at residues asparagine 131 and asparagine 166. Serine 204 serves as the catalytic Charge relay system. An N-linked (GlcNAc...) asparagine glycan is attached at asparagine 211.

This sequence belongs to the peptidase S1 family. Kallikrein subfamily. Skin, thymus, trachea, cerebellum and spinal cord.

Its subcellular location is the secreted. The polypeptide is Kallikrein-9 (KLK9) (Homo sapiens (Human)).